Consider the following 821-residue polypeptide: Protein EFR3 homolog A (821 aa).

Phosphoserine is present on residues serine 360, serine 363, serine 422, and serine 694.

Belongs to the EFR3 family. In terms of assembly, component of a phosphatidylinositol 4-kinase (PI4K) complex, composed of PI4KA, EFR3 (EFR3A or EFR3B), TTC7 (TTC7A or TTC7B) and HYCC (HYCC1 or HYCC2). Post-translationally, palmitoylated at its N-terminus, anchoring the protein to the plasma membrane.

The protein localises to the cell membrane. It is found in the cytoplasm. It localises to the cytosol. In terms of biological role, component of a complex required to localize phosphatidylinositol 4-kinase (PI4K) to the plasma membrane. The complex acts as a regulator of phosphatidylinositol 4-phosphate (PtdIns(4)P) synthesis. In the complex, EFR3A probably acts as the membrane-anchoring component. Also involved in responsiveness to G-protein-coupled receptors; it is however unclear whether this role is direct or indirect. The sequence is that of Protein EFR3 homolog A from Homo sapiens (Human).